A 1885-amino-acid chain; its full sequence is Fatty acid synthase subunit alpha (1885 aa).

The span at 92 to 107 shows a compositional bias: basic and acidic residues; the sequence is PDPADLAPKETPKQEE. Positions 92-140 are disordered; that stretch reads PDPADLAPKETPKQEESTPSAPAAATPTPAAAAAPTPAPAPASAGPVES. A compositionally biased stretch (low complexity) spans 108 to 126; it reads STPSAPAAATPTPAAAAAP. The region spanning 146–221 is the Carrier domain; the sequence is VKANLLIHVL…EQFQDSFSGQ (76 aa). Residue S181 is modified to O-(pantetheine 4'-phosphoryl)serine. Residues 1121 to 1661 enclose the Ketosynthase family 3 (KS3) domain; the sequence is IQEIVVQHDL…QKGAQAVVVH (541 aa). Active-site for beta-ketoacyl synthase activity residues include C1304, H1546, and H1587. The Mg(2+) site is built by D1771, V1772, and E1773. Acetyl-CoA is bound by residues 1771–1773, Y1797, S1807, 1816–1826, 1840–1843, and 1870–1872; these read DVE, EAVFKALGVES, RDVN, and ISH. Residues S1871 and H1872 each contribute to the Mg(2+) site.

The protein belongs to the thiolase-like superfamily. Fungal fatty acid synthetase subunit alpha family. [Alpha(6)beta(6)] hexamers of two multifunctional subunits (alpha and beta).

The catalysed reaction is acetyl-CoA + n malonyl-CoA + 2n NADPH + 4n H(+) = a long-chain-acyl-CoA + n CoA + n CO2 + 2n NADP(+).. It carries out the reaction a fatty acyl-[ACP] + malonyl-[ACP] + H(+) = a 3-oxoacyl-[ACP] + holo-[ACP] + CO2. It catalyses the reaction a (3R)-hydroxyacyl-[ACP] + NADP(+) = a 3-oxoacyl-[ACP] + NADPH + H(+). In terms of biological role, fatty acid synthetase catalyzes the formation of long-chain fatty acids from acetyl-CoA, malonyl-CoA and NADPH. The alpha subunit contains domains for: acyl carrier protein, 3-oxoacyl-[acyl-carrier-protein] reductase, and 3-oxoacyl-[acyl-carrier-protein] synthase. The protein is Fatty acid synthase subunit alpha (FAS2) of Candida albicans (Yeast).